The chain runs to 327 residues: tRNA uridine(34) hydroxylase (327 aa).

The region spanning 123 to 217 (SDPEVLVVDT…YLEEVPQEQS (95 aa)) is the Rhodanese domain. Cysteine 177 serves as the catalytic Cysteine persulfide intermediate.

Belongs to the TrhO family.

The enzyme catalyses uridine(34) in tRNA + AH2 + O2 = 5-hydroxyuridine(34) in tRNA + A + H2O. In terms of biological role, catalyzes oxygen-dependent 5-hydroxyuridine (ho5U) modification at position 34 in tRNAs. The polypeptide is tRNA uridine(34) hydroxylase (Vibrio cholerae serotype O1 (strain ATCC 39315 / El Tor Inaba N16961)).